Reading from the N-terminus, the 122-residue chain is MIQTQSFLNVADNSGARKLMCIRILNSSNCKYANIGDTIIAVVKEAIPNMSIKKSEIVKAVVVRTRKGIKRQSGITIRFDDNAAVIINQDGNPRGTRVFGPVARELREENFTKIVSLAPEVL.

It belongs to the universal ribosomal protein uL14 family. As to quaternary structure, part of the 50S ribosomal subunit.

The protein localises to the plastid. It localises to the chloroplast. Binds to 23S rRNA. The chain is Large ribosomal subunit protein uL14c from Chara vulgaris (Common stonewort).